The following is a 276-amino-acid chain: MLMITSFANPRVAQAFVDYMATQGVILTIQQHNQSDVWLADESQAERVRAELARFLENPADPRYLAASWQAGHTGSGLHYRRYPFFAALRERAGPVTWVMMIACVVVFIAMQILGDQEVMLWLAWPFDPALKFEFWRYFTHALMHFSLMHILFNLLWWWYLGGAVEKRLGSGKLIVITLISALLSGYVQQKFSGPWFGGLSGVVYALMGYVWLRGERDPQSGIYLQRGLIIFALIWIVAGWFDLFGMSMANGAHIAGLAVGLAMAFVDSLNARKRK.

A run of 6 helical transmembrane segments spans residues Gly-94–Leu-114, Ala-142–Gly-162, Leu-169–Gln-189, Phe-192–Trp-212, Leu-229–Met-249, and Ala-250–Leu-270. Ser-201 acts as the Nucleophile in catalysis. The active site involves His-254.

Belongs to the peptidase S54 family.

The protein localises to the cell inner membrane. The enzyme catalyses Cleaves type-1 transmembrane domains using a catalytic dyad composed of serine and histidine that are contributed by different transmembrane domains.. Rhomboid-type serine protease that catalyzes intramembrane proteolysis. This Escherichia coli O157:H7 protein is Rhomboid protease GlpG.